The chain runs to 300 residues: MDPQYARWVKAAALSATALASILLIIKIFAWWHTGSVSLLAALVDSLVDLAASLTNLFVVRYSLQPADEEHTFGHGKAESLAALAQSMFISGSALFLFLTGFRHLASPEPLQDPSIGIGVTLVALFSTLILVTFQRWVVRKTHSQAIRADMLHYQSDVLMNGAILIALALSWYGFRRADALFALGIGVYILYSALRMGYEAVQSLLDRALPDDERQQIIDIVTSWPGVIGAHDLRTRRSGQTRFIQLHLEMEDMMPLMEAHVLAEQVEHALLYRFPGADVLIHQDPCSVVPKERHAHWEL.

Helical transmembrane passes span 12–32, 40–60, 82–102, and 114–134; these read AALS…FAWW, LAAL…LFVV, AALA…LTGF, and PSIG…LVTF. Positions 45 and 49 each coordinate Zn(2+). Residues histidine 153 and aspartate 157 each contribute to the Zn(2+) site. The next 2 helical transmembrane spans lie at 155-175 and 178-198; these read QSDV…WYGF and ADAL…LRMG.

This sequence belongs to the cation diffusion facilitator (CDF) transporter (TC 2.A.4) family. FieF subfamily. Homodimer.

The protein resides in the cell inner membrane. It catalyses the reaction Zn(2+)(in) + H(+)(out) = Zn(2+)(out) + H(+)(in). The enzyme catalyses Cd(2+)(in) + H(+)(out) = Cd(2+)(out) + H(+)(in). It carries out the reaction Fe(2+)(in) + H(+)(out) = Fe(2+)(out) + H(+)(in). Its function is as follows. Divalent metal cation transporter which exports Zn(2+), Cd(2+) and possibly Fe(2+). May be involved in zinc and iron detoxification by efflux. The protein is Cation-efflux pump FieF of Yersinia pestis bv. Antiqua (strain Antiqua).